Here is a 580-residue protein sequence, read N- to C-terminus: Tricyclene synthase TPS4, chloroplastic (580 aa).

The transit peptide at 1-41 (MLLNSSFISLPSFFKSQELGRTNLLIHRNGSPLLCYATNTN) directs the protein to the chloroplast. Positions 296, 334, 338, 475, and 478 each coordinate (2E)-geranyl diphosphate. Mg(2+) is bound by residues Asp334 and Asp338. The DDXXD motif motif lies at 334-338 (DDIYD). Mg(2+) contacts are provided by Asn478, Thr482, and Glu486.

This sequence belongs to the terpene synthase family. Tpsb subfamily. It depends on Mg(2+) as a cofactor. Requires Mn(2+) as cofactor. As to expression, expressed in leaves.

The protein resides in the plastid. Its subcellular location is the chloroplast stroma. The catalysed reaction is (2E)-geranyl diphosphate = tricyclene + diphosphate. It carries out the reaction (2E)-geranyl diphosphate = (E)-beta-ocimene + diphosphate. The protein operates within secondary metabolite biosynthesis; terpenoid biosynthesis. Its function is as follows. Promotes the emission of terpenes volatile organic compounds (VOC) in response to damage mediated by arthropod herbivores (e.g. Spodoptera exigua), probably to attract natural enemies of the herbivores. In Medicago truncatula (Barrel medic), this protein is Tricyclene synthase TPS4, chloroplastic (TPS4).